Consider the following 485-residue polypeptide: N-succinylglutamate 5-semialdehyde dehydrogenase (485 aa).

220 to 225 (GSANTG) contributes to the NAD(+) binding site. Active-site residues include E243 and C278.

The protein belongs to the aldehyde dehydrogenase family. AstD subfamily.

The catalysed reaction is N-succinyl-L-glutamate 5-semialdehyde + NAD(+) + H2O = N-succinyl-L-glutamate + NADH + 2 H(+). Its pathway is amino-acid degradation; L-arginine degradation via AST pathway; L-glutamate and succinate from L-arginine: step 4/5. Functionally, catalyzes the NAD-dependent reduction of succinylglutamate semialdehyde into succinylglutamate. This Vibrio atlanticus (strain LGP32) (Vibrio splendidus (strain Mel32)) protein is N-succinylglutamate 5-semialdehyde dehydrogenase.